A 455-amino-acid polypeptide reads, in one-letter code: ADP-dependent glucose/glucosamine kinase (455 aa).

Residues 2–455 (PTWEELYKNA…AFIGEFSFTL (454 aa)) form the ADPK domain. Residues D34, E88, 112–113 (GQ), and H176 contribute to the D-glucose site. E195 provides a ligand contact to ADP. E266 contacts Mg(2+). Residue N292 coordinates ADP. E295 contributes to the Mg(2+) binding site. ADP contacts are provided by residues 342–343 (HT), V429, and G439. A D-glucose-binding site is contributed by D440. D440 lines the Mg(2+) pocket. D440 acts as the Proton acceptor in catalysis.

This sequence belongs to the ADP-dependent glucokinase family. As to quaternary structure, homodimer. It depends on Mg(2+) as a cofactor.

The protein resides in the cytoplasm. The enzyme catalyses D-glucose + ADP = D-glucose 6-phosphate + AMP + H(+). The catalysed reaction is D-glucosamine + ADP = D-glucosamine 6-phosphate + AMP + H(+). It functions in the pathway carbohydrate degradation; glycolysis. Catalyzes the ADP-dependent phosphorylation of D-glucose to D-glucose 6-phosphate and glucosamine to glucosamine 6-phosphate. Can also use CDP as the phosphoryl group donor and D-1,5-anhydroglucitol as the phosphoryl group acceptor. In Pyrococcus furiosus (strain ATCC 43587 / DSM 3638 / JCM 8422 / Vc1), this protein is ADP-dependent glucose/glucosamine kinase.